We begin with the raw amino-acid sequence, 188 residues long: Phosphoribosylglycinamide formyltransferase (188 aa).

12–14 lines the N(1)-(5-phospho-beta-D-ribosyl)glycinamide pocket; the sequence is GSN. Residues Lys66, 91–94, and Asn108 each bind (6R)-10-formyltetrahydrofolate; that span reads MRLI. The Proton donor role is filled by His110.

The protein belongs to the GART family.

The catalysed reaction is N(1)-(5-phospho-beta-D-ribosyl)glycinamide + (6R)-10-formyltetrahydrofolate = N(2)-formyl-N(1)-(5-phospho-beta-D-ribosyl)glycinamide + (6S)-5,6,7,8-tetrahydrofolate + H(+). It participates in purine metabolism; IMP biosynthesis via de novo pathway; N(2)-formyl-N(1)-(5-phospho-D-ribosyl)glycinamide from N(1)-(5-phospho-D-ribosyl)glycinamide (10-formyl THF route): step 1/1. Functionally, catalyzes the transfer of a formyl group from 10-formyltetrahydrofolate to 5-phospho-ribosyl-glycinamide (GAR), producing 5-phospho-ribosyl-N-formylglycinamide (FGAR) and tetrahydrofolate. This Staphylococcus aureus (strain Mu50 / ATCC 700699) protein is Phosphoribosylglycinamide formyltransferase.